Consider the following 807-residue polypeptide: MSTPENTLVTPNTSDTIPTASAAKRYDIVVTCADGLEAPLQTELSHMDISHELKSTGRIAVNATLEQIYKICLWSRVASRVLLPIKKRNINKEYDVAEQLNGLARTVDWTEWFELDNTFAIRMSVDKRVQVSQQFAMLRIKDAIADTFSEKLDARPDVDSNNPDFPIYATVNEKQAEIFLDLSGTSLHRRGYRVAMTDAPLKENLAAGLLYTVGWHKTKNSYSALIDPMCGSGTFIIEALLMHCDYPVGIDKAESQFGFYNWQEHDSELWQQCVVQAQERFHNGLQKAAAGKLPTILGFDADAGAIKAVHKNLIAAGLIELIPHLTLEQRPLSQLKIALAKPLLDRKLKRPLVITNPPYGERLGESDFIKPLYQGLGLTLQEIFAKQKYQPMLGLLAAHVEQADVLPIEDPQTLRCHNGAITVYFRHGQLIRKEGESLITRFEKTEIKVDEAQDFVNRLQKNVNHLKKLAAKEDVTNLRVYDADLPDYKVAIDVYGDYVHVQEWAPPKSIPPETARKRFNLALMGIREVFGINREQIFIKTRARQVGNTQYGNPEASAQSKESKNAPEPKKDNRNRYKGNKFQQAREEAKRQEAQRLAQKKRKMHVVQEDGAYFYVNFTDYLDTGLFIDHRNMRSMIRSASRGADVLNLFAYTCTASVHAALGGAKSVTSVDLSQNYLDWGKQNFALNGLDVTTSRYQFIASDIFDWIKDNTDQFDVIFIDPPTFSNSKKFQGTFDVQRDHTALINRAMNRLANGGVIYFSNNFTKFELDEELYDRYEVTEITSETIGFDFNPKKPIHHSFEIRHKL.

One can recognise a THUMP domain in the interval 67–182 (QIYKICLWSR…EKQAEIFLDL (116 aa)). A compositionally biased stretch (polar residues) spans 548–560 (NTQYGNPEASAQS). The tract at residues 548-602 (NTQYGNPEASAQSKESKNAPEPKKDNRNRYKGNKFQQAREEAKRQEAQRLAQKKR) is disordered. 2 stretches are compositionally biased toward basic and acidic residues: residues 561-575 (KESK…DNRN) and 584-594 (QAREEAKRQEA).

The protein belongs to the methyltransferase superfamily. RlmKL family.

It is found in the cytoplasm. It catalyses the reaction guanosine(2445) in 23S rRNA + S-adenosyl-L-methionine = N(2)-methylguanosine(2445) in 23S rRNA + S-adenosyl-L-homocysteine + H(+). It carries out the reaction guanosine(2069) in 23S rRNA + S-adenosyl-L-methionine = N(2)-methylguanosine(2069) in 23S rRNA + S-adenosyl-L-homocysteine + H(+). Specifically methylates the guanine in position 2445 (m2G2445) and the guanine in position 2069 (m7G2069) of 23S rRNA. This is Ribosomal RNA large subunit methyltransferase K/L from Psychrobacter sp. (strain PRwf-1).